The chain runs to 1523 residues: Disco-interacting protein 2 homolog A (1523 aa).

A DMAP1-binding domain is found at 9 to 105; that stretch reads EAAPLPAEVL…TSSASEDEGS (97 aa). Residues 72–110 form a disordered region; sequence KMPMPSKRRSALVHSSVETYTPPDTSSASEDEGSLRRPG. Positions 87–99 are enriched in polar residues; sequence SVETYTPPDTSSA. Residues threonine 92 and threonine 115 each carry the phosphothreonine modification. Positions 132–158 are disordered; sequence QGSSTSSSASSTSSHPGGRPAAAPSAS. Residues 134–158 are compositionally biased toward low complexity; that stretch reads SSTSSSASSTSSHPGGRPAAAPSAS. 2 consecutive short sequence motifs (PXXP motif; required for interaction with CTTN) follow at residues 235–238 and 259–262; these read PKRP and PNQP.

It belongs to the DIP2 family. As to quaternary structure, interacts with FSTL1; DIP2A may act as a cell surface receptor for FSTL1. Interacts (via N-terminus) with CTTN (via SH3 domain); the interaction promotes acetylation of CTTN and is required for proper synaptic transmission. Interacts with SHANK3. As to expression, detected in heart, liver, spleen, lung, kidney and brain with highest levels in brain (at protein level). In adult cortex, preferentially expressed in excitatory neurons. Broadly expressed in neuronal, reproductive and vascular tissues as well as in heart, kidney, liver and lung with expression detected in neurons, mesenchyme, endothelium, smooth muscle cells and cardiomyocytes. Expressed in ectoderm-derived tissues in the developing embryo. Expressed in the developing nervous system.

The protein resides in the cell membrane. The protein localises to the mitochondrion. It localises to the cell projection. It is found in the dendritic spine. The catalysed reaction is acetate + ATP + CoA = acetyl-CoA + AMP + diphosphate. In terms of biological role, catalyzes the de novo synthesis of acetyl-CoA in vitro. Promotes acetylation of CTTN, possibly by providing the acetyl donor, ensuring correct dendritic spine morphology and synaptic transmission. Binds to follistatin-related protein FSTL1 and may act as a cell surface receptor for FSTL1, contributing to AKT activation and subsequent FSTL1-induced survival and function of endothelial cells and cardiac myocytes. This chain is Disco-interacting protein 2 homolog A (Dip2a), found in Mus musculus (Mouse).